The following is a 214-amino-acid chain: Glutathione S-transferase F12 (214 aa).

The 81-residue stretch at 2–82 (VVKLYGQVTA…YYATKFADQG (81 aa)) folds into the GST N-terminal domain. Residues 11-12 (AA), 40-41 (QK), 53-54 (QV), and 66-67 (ES) each bind glutathione. The GST C-terminal domain maps to 89 to 214 (SLEHRAIVDQ…WKKLMVLAGH (126 aa)).

Belongs to the GST superfamily. Phi family.

The protein resides in the cytoplasm. It is found in the cytosol. It catalyses the reaction RX + glutathione = an S-substituted glutathione + a halide anion + H(+). In terms of biological role, involved in the transport and/or accumulation of both anthocyanins and proanthocyanidins (PA)s in the vacuole. Functions in the cytosol to maintain the regular accumulation in the vacuole of PA precursors, such as epicatechin and glycosylated epicatechin. The chain is Glutathione S-transferase F12 from Arabidopsis thaliana (Mouse-ear cress).